The primary structure comprises 244 residues: Small ribosomal subunit protein uS3 (244 aa).

Residues I38 to K106 enclose the KH type-2 domain. Positions T217–R244 are disordered. Positions G225 to K235 are enriched in gly residues.

The protein belongs to the universal ribosomal protein uS3 family. In terms of assembly, part of the 30S ribosomal subunit. Forms a tight complex with proteins S10 and S14.

In terms of biological role, binds the lower part of the 30S subunit head. Binds mRNA in the 70S ribosome, positioning it for translation. This is Small ribosomal subunit protein uS3 from Bacteroides fragilis (strain ATCC 25285 / DSM 2151 / CCUG 4856 / JCM 11019 / LMG 10263 / NCTC 9343 / Onslow / VPI 2553 / EN-2).